Reading from the N-terminus, the 318-residue chain is Ribonuclease Z (318 aa).

The Zn(2+) site is built by His63, His65, Asp67, His68, His142, Asp213, and His273. The active-site Proton acceptor is the Asp67.

Belongs to the RNase Z family. As to quaternary structure, homodimer. Zn(2+) is required as a cofactor.

It catalyses the reaction Endonucleolytic cleavage of RNA, removing extra 3' nucleotides from tRNA precursor, generating 3' termini of tRNAs. A 3'-hydroxy group is left at the tRNA terminus and a 5'-phosphoryl group is left at the trailer molecule.. In terms of biological role, zinc phosphodiesterase, which displays some tRNA 3'-processing endonuclease activity. Probably involved in tRNA maturation, by removing a 3'-trailer from precursor tRNA. The polypeptide is Ribonuclease Z (Leuconostoc mesenteroides subsp. mesenteroides (strain ATCC 8293 / DSM 20343 / BCRC 11652 / CCM 1803 / JCM 6124 / NCDO 523 / NBRC 100496 / NCIMB 8023 / NCTC 12954 / NRRL B-1118 / 37Y)).